A 410-amino-acid chain; its full sequence is 26S proteasome non-ATPase regulatory subunit 6 (410 aa).

Residues 207 to 382 (DFAGAADLFL…GVIEVNHRDS (176 aa)) enclose the PCI domain.

This sequence belongs to the proteasome subunit S10 family. As to expression, expressed in multiple tissues including the intestine, pharynx and hypodermis.

In terms of biological role, acts as a regulatory subunit of the 26S proteasome which is involved in the ATP-dependent degradation of ubiquitinated proteins. This chain is 26S proteasome non-ATPase regulatory subunit 6 (rpn-7), found in Caenorhabditis elegans.